Consider the following 436-residue polypeptide: Serine hydroxymethyltransferase (436 aa).

Residues L120 and 124-126 (GHL) contribute to the (6S)-5,6,7,8-tetrahydrofolate site. K229 is modified (N6-(pyridoxal phosphate)lysine).

This sequence belongs to the SHMT family. In terms of assembly, homodimer. The cofactor is pyridoxal 5'-phosphate.

Its subcellular location is the cytoplasm. It catalyses the reaction (6R)-5,10-methylene-5,6,7,8-tetrahydrofolate + glycine + H2O = (6S)-5,6,7,8-tetrahydrofolate + L-serine. It functions in the pathway one-carbon metabolism; tetrahydrofolate interconversion. The protein operates within amino-acid biosynthesis; glycine biosynthesis; glycine from L-serine: step 1/1. Functionally, catalyzes the reversible interconversion of serine and glycine with tetrahydrofolate (THF) serving as the one-carbon carrier. This reaction serves as the major source of one-carbon groups required for the biosynthesis of purines, thymidylate, methionine, and other important biomolecules. Also exhibits THF-independent aldolase activity toward beta-hydroxyamino acids, producing glycine and aldehydes, via a retro-aldol mechanism. This is Serine hydroxymethyltransferase from Roseiflexus castenholzii (strain DSM 13941 / HLO8).